The primary structure comprises 486 residues: Vesicular GABA transporter (486 aa).

At 1-93 (MASNRFQNLQ…EASEPISALQ (93 aa)) the chain is on the cytoplasmic side. Over residues 29–46 (LNEVPSYQNQPQTGESGS) the composition is skewed to polar residues. Residues 29 to 85 (LNEVPSYQNQPQTGESGSNPPPHDRLEPIQESVVSEQPQKDDINKQEEAKDDGHGEA) form a disordered region. The segment covering 66–85 (PQKDDINKQEEAKDDGHGEA) has biased composition (basic and acidic residues). Residues 94–114 (AAWNVTNAIQGMFIVGLPIAV) traverse the membrane as a helical segment. The Lumenal, vesicle portion of the chain corresponds to 115-119 (KVGGW). A helical membrane pass occupies residues 120 to 140 (WSIGAMVGVAYVCYWTGVLLI). At 141–167 (ECLYENGVKKRKTYREIADFYKPGFGK) the chain is on the cytoplasmic side. The chain crosses the membrane as a helical span at residues 168–188 (WVLAAQLTELLSTCIIYLVLA). At 189-203 (ADLLQSCFPSVDKAG) the chain is on the lumenal, vesicle side. A helical membrane pass occupies residues 204-224 (WMMITSASLLTCSFLDDLQIV). Topologically, residues 225-228 (SRLS) are cytoplasmic. A helical transmembrane segment spans residues 229 to 249 (FFNAISHLIVNLIMVLYCLSF). Residues 250 to 263 (VSQWSFSTITFSLN) are Lumenal, vesicle-facing. A helical membrane pass occupies residues 264–284 (INTLPTIVGMVVFGYTSHIFL). At 285–305 (PNLEGNMKNPAQFNVMLKWSH) the chain is on the cytoplasmic side. The helical transmembrane segment at 306-326 (IAAAVFKVVFGMLGFLTFGEL) threads the bilayer. At 327–341 (TQEEISNSLPNQSFK) the chain is on the lumenal, vesicle side. Asn337 carries an N-linked (GlcNAc...) asparagine glycan. The chain crosses the membrane as a helical span at residues 342–362 (ILVNLILVVKALLSYPLPFYA). At 363–398 (AVQLLKNNLFLGYPQTPFTSCYSPDKSLREWAVTLR) the chain is on the cytoplasmic side. A helical transmembrane segment spans residues 399–419 (IILVLFTLFVALSVPYLVELM). Residues 420–421 (GL) are Lumenal, vesicle-facing. The helical transmembrane segment at 422–442 (VGNITGTMLSFIWPALFHLYI) threads the bilayer. The Cytoplasmic portion of the chain corresponds to 443–457 (KEKTLNNFEKRFDQG). Residues 458–478 (IIIMGCSVCISGVYFSSMELL) form a helical membrane-spanning segment. The Lumenal, vesicle portion of the chain corresponds to 479–486 (RAINSADS).

Belongs to the amino acid/polyamine transporter 2 family.

The protein resides in the cytoplasmic vesicle membrane. Involved in the uptake of GABA into the synaptic vesicles. This is Vesicular GABA transporter (unc-47) from Caenorhabditis elegans.